Consider the following 611-residue polypeptide: Zinc metalloproteinase-disintegrin-like ohanin (611 aa).

Residues 1–20 (MIQVLLVTICLVVFPYQGSS) form the signal peptide. Residues 21–187 (IILESGKVND…WESDEPIEKI (167 aa)) constitute a propeptide that is removed on maturation. The Peptidase M12B domain maps to 198 to 393 (KYLELYIVAD…DTPQCLINKP (196 aa)). N-linked (GlcNAc...) asparagine glycans are attached at residues Asn217 and Asn260. Cystine bridges form between Cys307/Cys388, Cys347/Cys372, and Cys349/Cys354. His332 serves as a coordination point for Zn(2+). The active site involves Glu333. 2 residues coordinate Zn(2+): His336 and His342. Residue Asn395 is glycosylated (N-linked (GlcNAc...) asparagine). The 87-residue stretch at 401-487 (NAVCGNYVEE…ECPMDRFHKN (87 aa)) folds into the Disintegrin domain. 14 disulfide bridges follow: Cys404–Cys433, Cys415–Cys428, Cys417–Cys423, Cys427–Cys450, Cys441–Cys447, Cys446–Cys472, Cys459–Cys479, Cys466–Cys498, Cys491–Cys503, Cys510–Cys560, Cys525–Cys578, Cys538–Cys548, Cys555–Cys603, and Cys597–Cys608. Positions 465-467 (ECD) match the D/ECD-tripeptide motif. Asn528 is a glycosylation site (N-linked (GlcNAc...) asparagine).

This sequence belongs to the venom metalloproteinase (M12B) family. P-III subfamily. P-IIIa sub-subfamily. In terms of assembly, monomer. The cofactor is Zn(2+). As to expression, expressed by the venom gland.

Its subcellular location is the secreted. Inhibited by EDTA, but not by PMSF. In terms of biological role, snake venom zinc metalloproteinase that has hemorrhagic activity. Inhibits ADP-, TMVA- and stejnulxin-induced platelet aggregation in a dose-dependent manner (on washed platelet, but not on platelet rich plasm). Also specifically degrades alpha-chain of fibrinogen (FGA). This is Zinc metalloproteinase-disintegrin-like ohanin from Ophiophagus hannah (King cobra).